We begin with the raw amino-acid sequence, 122 residues long: Large ribosomal subunit protein uL14 (122 aa).

This sequence belongs to the universal ribosomal protein uL14 family. As to quaternary structure, part of the 50S ribosomal subunit. Forms a cluster with proteins L3 and L19. In the 70S ribosome, L14 and L19 interact and together make contacts with the 16S rRNA in bridges B5 and B8.

Its function is as follows. Binds to 23S rRNA. Forms part of two intersubunit bridges in the 70S ribosome. The sequence is that of Large ribosomal subunit protein uL14 from Trichodesmium erythraeum (strain IMS101).